The chain runs to 252 residues: Beta-crystallin B1 (252 aa).

Composition is skewed to low complexity over residues Met-1–Val-15 and Lys-24–Thr-37. The segment at Met-1 to Thr-42 is disordered. Residue Ser-2 is modified to N-acetylserine. Positions Ser-2–Asn-58 are N-terminal arm. Beta/gamma crystallin 'Greek key' domains are found at residues Tyr-59–Ala-98 and Gly-99–Lys-143. The tract at residues Met-144–Glu-148 is connecting peptide. Beta/gamma crystallin 'Greek key' domains lie at His-149–Ser-190 and Gly-191–Arg-233. Positions Lys-235–Lys-252 are C-terminal arm.

Belongs to the beta/gamma-crystallin family. In terms of assembly, homo/heterodimer, or complexes of higher-order. The structure of beta-crystallin oligomers seems to be stabilized through interactions between the N-terminal arms. Post-translationally, specific cleavages in the N-terminal arm occur during lens maturation and give rise to truncated forms, leading to impaired oligomerization and protein insolubilization.

Crystallins are the dominant structural components of the vertebrate eye lens. This Homo sapiens (Human) protein is Beta-crystallin B1 (CRYBB1).